The following is a 233-amino-acid chain: Protease inhibitor Egf1.0 (233 aa).

Residues 1–28 (MYIDTGIMSNNIFLFAFFALVGLTRIEA) form the signal peptide. The region spanning 52–104 (CRENEHYNSTRIECEEECNDRNNKLCYRFQQFCWCNEGYIRNSSHICVKLEDC) is the TIL domain. The tract at residues 201–233 (FGKPKNSSAEKKPLETETQAQKFNGIIDQETLD) is disordered.

The protein belongs to the polydnaviridae EGF-like motif protein family. Interacts with host PAP1 and PAP3.

In terms of biological role, counteracts the host humoral immune response by inhibiting the processing and the amidolytic activity of host PAP3. Thereby, melanization of host hemolymph, normally producing several reactive intermediates toxic for viruses, is deregulated and proper immune response cannot occur. The chain is Protease inhibitor Egf1.0 (O12) from Microplitis demolitor (Parasitoid wasp).